Consider the following 168-residue polypeptide: Scytalone dehydratase arp1 (168 aa).

Tyrosine 29 and tyrosine 49 together coordinate substrate. Active-site residues include histidine 84 and histidine 109. A substrate-binding site is contributed by asparagine 130.

It belongs to the scytalone dehydratase family. Homotrimer. Each subunit contains an active site, located in the central part of the hydrophobic core of the monomer, which functions independently.

The protein resides in the endosome. The catalysed reaction is scytalone = 1,3,8-trihydroxynaphthalene + H2O. It participates in pigment biosynthesis; melanin biosynthesis. Its activity is regulated as follows. Fenoxanil inhibits arp1 scytalone dehydratase activity. Scytalone dehydratase; part of the gene cluster that mediates the biosynthesis of dihydroxynaphthalene (DHN)-melanin, a bluish-green pigment and a structural component of the conidial wall. The first step of the pathway is the production of the heptaketide naphtopyrone YWA1 by the polyketide synthase alb1 though condensation of acetyl-CoA with malonyl-CoA. The naphtopyrone YWA1 is then converted to the pentaketide 1,3,6,8-tetrahydroxynaphthalene (1,3,6,8-THN) by the heptaketide hydrolyase ayg1 though chain-length shortening. 1,3,6,8-THN is substrate of the hydroxynaphthalene reductase arp2 to yield scytalone. The scytalone dehydratase arp1 then reduces scytalone to 1,3,8-THN. 1,3,8-THN is also substrate of the hydroxynaphthalene reductase arp2 to yield vermelone. Vermelone is further converted by the multicopper oxidase abr1 to 1,8-DHN. Finally the laccase abr2 transforms 1,8-DHN to DHN-melanin. DHN-melanin biosynthesis appears to be initiated in endosomes where early enzymes (abl1, ayg1, arp1 and arp2) localize, with exocytosis leading to melanin deposition on the cell surface where late enzymes (abr1 and abr2) localize. DHN-melanin is an important structural component of the outer cell wall and is required for the presence of conidial surface hydrophobins. DHN-melanin also plays a crucial role in fungal virulence, including a protective role against the host's immune defenses. DHN-melanin also protects conidia against amoeba predation. This chain is Scytalone dehydratase arp1, found in Aspergillus fumigatus (strain ATCC MYA-4609 / CBS 101355 / FGSC A1100 / Af293) (Neosartorya fumigata).